A 78-amino-acid chain; its full sequence is Toxin-like protein 10 (78 aa).

A signal peptide spans 1-23; the sequence is MKATALLIAVFILFSVFGDMGYC.

In terms of processing, contains 4 disulfide bonds. In terms of tissue distribution, expressed by the venom gland.

The protein localises to the secreted. This is Toxin-like protein 10 from Urodacus yaschenkoi (Inland robust scorpion).